Here is a 180-residue protein sequence, read N- to C-terminus: UPF0149 protein XCV3523 (180 aa).

It belongs to the UPF0149 family.

In Xanthomonas euvesicatoria pv. vesicatoria (strain 85-10) (Xanthomonas campestris pv. vesicatoria), this protein is UPF0149 protein XCV3523.